The sequence spans 78 residues: Beta-defensin 105A (78 aa).

An N-terminal signal peptide occupies residues 1-27; sequence MALIRKTFYFLFAVFFILVQLPSGCQA. Cystine bridges form between C43/C74, C53/C67, and C57/C73.

It belongs to the beta-defensin family.

The protein resides in the secreted. Its function is as follows. Has antimicrobial activity. The sequence is that of Beta-defensin 105A (DEFB105A) from Gorilla gorilla gorilla (Western lowland gorilla).